Consider the following 108-residue polypeptide: Large ribosomal subunit protein uL24 (108 aa).

This sequence belongs to the universal ribosomal protein uL24 family. As to quaternary structure, part of the 50S ribosomal subunit.

Its function is as follows. One of two assembly initiator proteins, it binds directly to the 5'-end of the 23S rRNA, where it nucleates assembly of the 50S subunit. One of the proteins that surrounds the polypeptide exit tunnel on the outside of the subunit. The sequence is that of Large ribosomal subunit protein uL24 from Mycoplasma capricolum subsp. capricolum (strain California kid / ATCC 27343 / NCTC 10154).